Reading from the N-terminus, the 476-residue chain is Arginine biosynthesis bifunctional protein ArgJ, mitochondrial (476 aa).

Substrate-binding residues include Thr-204, Lys-233, Thr-244, Glu-331, Asn-471, and Thr-476. Residue Thr-244 is the Nucleophile of the active site.

The protein belongs to the ArgJ family. Heterodimer of an alpha and a beta chain. The alpha and beta chains are autoproteolytically processed from a single precursor protein within the mitochondrion.

The protein resides in the mitochondrion matrix. The catalysed reaction is N(2)-acetyl-L-ornithine + L-glutamate = N-acetyl-L-glutamate + L-ornithine. It carries out the reaction L-glutamate + acetyl-CoA = N-acetyl-L-glutamate + CoA + H(+). It functions in the pathway amino-acid biosynthesis; L-arginine biosynthesis; L-ornithine and N-acetyl-L-glutamate from L-glutamate and N(2)-acetyl-L-ornithine (cyclic): step 1/1. Its pathway is amino-acid biosynthesis; L-arginine biosynthesis; N(2)-acetyl-L-ornithine from L-glutamate: step 1/4. Its function is as follows. Catalyzes two activities which are involved in the cyclic version of arginine biosynthesis: the synthesis of acetylglutamate from glutamate and acetyl-CoA, and of ornithine by transacetylation between acetylornithine and glutamate. The sequence is that of Arginine biosynthesis bifunctional protein ArgJ, mitochondrial from Arthroderma otae (strain ATCC MYA-4605 / CBS 113480) (Microsporum canis).